A 495-amino-acid chain; its full sequence is Alpha-1B-glycoprotein (495 aa).

Positions 1–21 (MSMLVVFLLLWGVTWGPVTEA) are cleaved as a signal peptide. 5 Ig-like V-type domains span residues 22–113 (AIFY…LTGP), 114–206 (KSLP…ELAA), 207–299 (PPPP…PVEL), 300–397 (ILSD…LHVD), and 398–495 (GPPP…VAES). N44 carries N-linked (GlcNAc...) (complex) asparagine glycosylation. Cystine bridges form between C49-C93, C139-C182, C232-C279, C325-C374, and C423-C470. A glycan (N-linked (GlcNAc...) asparagine) is linked at N179. N-linked (GlcNAc...) asparagine glycans are attached at residues N363 and N371.

In terms of assembly, interacts with CRISP3. Plasma.

Its subcellular location is the secreted. The polypeptide is Alpha-1B-glycoprotein (A1BG) (Homo sapiens (Human)).